The sequence spans 940 residues: MKTNNTFLSYFVCGFLLMGVGLGQNQTSEIKVGVVLDLNTTFSKICLTSIKMAVSDFYADHPNYLTRLTLHVRDSMEDTVQASAAALDLIKTEQVSAIIGPINSMQADFMIKLANKTQVPTITFSATSPLLTSIKSPYFVRATIDDSSQVRAIASIFKFFRWRRVVAIYVDNEFGEGFMPFLFDALQDVEVKRSVIPPEAIDDEIQKELRKLMERQARVFVVHMESSLALRVFQIARDIGMMEEGYVWLMTNGMTHMMRHINNGRSLNTIEGVLGVRSHVPKSKELGDFRLRWKRTFEKENPSMRDDLNVFALWAYDSITALAKAVEKANTKSLWYDNGSTLSKNRTDLGNVGVSLYGPSLQKAFSEVRFNGLAGEFKLIDGQLQSPKFEIINFVGNEERIIGFWTPRDGLMDATSSNKKTLGPVIWPGKSKIVPKGWEIPGKKLRVGVPMKKGFFDFVKVTINPITNKKTPTGYAIEIFEAALKELPYLVIPEYVSFESPNNYNNLVYQVYDKTWDAVVGDITITANRSLYADFTLPFTESGVSMMVPVRDNENKDTWVFLEPWSLELWVTTGCFFVFIGFVVWLFEHRVNTDFRGPPQYQIGTSLWFSFSTMVFAHRENVVSNLARFVVVVWCFVVLVLTQSYTASLTSFLTVQSLQPTVTNVNDLIKNRDCVGYQGGAFVKDILLGLGFHEDQLKPFDSAKDADDLLSKGKSKGIAAAFDEVAYLKAILSQSCSKYVMVEPTFKTGGFGFAFPKNSPLTGEFSRAILNLTQNNVTQQIEDRWFPKKNDCPDPMTALSSNRLNLSSFLGLFLIAGTAISFSLLVFVALFLYEHRHTLGDDSEDSLWRKLKFLFKIFDEKDMNSHTFKNSAIHNISSPMTHKTPSPSTVQITPWPQSPSQNREFELRRVSFSPSEERFTTQPIIHHEDGESDIECRVEQ.

An N-terminal signal peptide occupies residues 1–23 (MKTNNTFLSYFVCGFLLMGVGLG). Over 24–566 (QNQTSEIKVG…DTWVFLEPWS (543 aa)) the chain is Extracellular. Residues N25, N39, N115, N338, N345, and N528 are each glycosylated (N-linked (GlcNAc...) asparagine). Residues 567–587 (LELWVTTGCFFVFIGFVVWLF) form a helical membrane-spanning segment. At 588–596 (EHRVNTDFR) the chain is on the cytoplasmic side. A helical membrane pass occupies residues 597–617 (GPPQYQIGTSLWFSFSTMVFA). Topologically, residues 618 to 628 (HRENVVSNLAR) are cytoplasmic. A helical transmembrane segment spans residues 629-649 (FVVVVWCFVVLVLTQSYTASL). Topologically, residues 650-811 (TSFLTVQSLQ…NRLNLSSFLG (162 aa)) are extracellular. N-linked (GlcNAc...) asparagine glycosylation is found at N771, N776, and N805. Residues 812 to 832 (LFLIAGTAISFSLLVFVALFL) form a helical membrane-spanning segment. Over 833–940 (YEHRHTLGDD…ESDIECRVEQ (108 aa)) the chain is Cytoplasmic. 2 disordered regions span residues 876–900 (ISSPMTHKTPSPSTVQITPWPQSPS) and 914–940 (PSEERFTTQPIIHHEDGESDIECRVEQ).

Belongs to the glutamate-gated ion channel (TC 1.A.10.1) family. In terms of assembly, may form heteromers. In terms of tissue distribution, expressed predominantly in roots.

It is found in the membrane. Functionally, glutamate-gated receptor that probably acts as a non-selective cation channel. May be involved in light-signal transduction and calcium homeostasis via the regulation of calcium influx into cells. This Arabidopsis thaliana (Mouse-ear cress) protein is Glutamate receptor 2.9 (GLR2.9).